We begin with the raw amino-acid sequence, 201 residues long: Adenylyl-sulfate kinase (201 aa).

35-42 (GLSGSGKS) provides a ligand contact to ATP. Ser-109 (phosphoserine intermediate) is an active-site residue.

Belongs to the APS kinase family.

It catalyses the reaction adenosine 5'-phosphosulfate + ATP = 3'-phosphoadenylyl sulfate + ADP + H(+). It participates in sulfur metabolism; hydrogen sulfide biosynthesis; sulfite from sulfate: step 2/3. Its function is as follows. Catalyzes the synthesis of activated sulfate. The protein is Adenylyl-sulfate kinase of Salmonella typhi.